A 217-amino-acid chain; its full sequence is UPF0319 protein HSM_0266 (217 aa).

A signal peptide spans Met-1–Ala-21.

Belongs to the UPF0319 family.

This Histophilus somni (strain 2336) (Haemophilus somnus) protein is UPF0319 protein HSM_0266.